Reading from the N-terminus, the 470-residue chain is 3-isopropylmalate dehydratase large subunit (470 aa).

[4Fe-4S] cluster is bound by residues cysteine 349, cysteine 410, and cysteine 413.

The protein belongs to the aconitase/IPM isomerase family. LeuC type 1 subfamily. As to quaternary structure, heterodimer of LeuC and LeuD. The cofactor is [4Fe-4S] cluster.

The enzyme catalyses (2R,3S)-3-isopropylmalate = (2S)-2-isopropylmalate. It participates in amino-acid biosynthesis; L-leucine biosynthesis; L-leucine from 3-methyl-2-oxobutanoate: step 2/4. Catalyzes the isomerization between 2-isopropylmalate and 3-isopropylmalate, via the formation of 2-isopropylmaleate. The sequence is that of 3-isopropylmalate dehydratase large subunit from Nitrosomonas europaea (strain ATCC 19718 / CIP 103999 / KCTC 2705 / NBRC 14298).